Reading from the N-terminus, the 259-residue chain is Probable iron export permease protein FetB (259 aa).

Topologically, residues M1 to N5 are periplasmic. The chain crosses the membrane as a helical span at residues I6–H26. Topologically, residues K27–D35 are cytoplasmic. 2 helical membrane-spanning segments follow: residues I36–Y56 and I57–A77. The Cytoplasmic segment spans residues A78–A91. Residues F92–L112 traverse the membrane as a helical segment. Topologically, residues S113–E117 are periplasmic. A helical transmembrane segment spans residues F118–V138. The Cytoplasmic portion of the chain corresponds to G139–T191. The helical transmembrane segment at V192 to V212 threads the bilayer. The Periplasmic segment spans residues K213 to Q218. Residues I219–L239 form a helical membrane-spanning segment. At T240–K259 the chain is on the cytoplasmic side.

Belongs to the UPF0014 family. As to quaternary structure, the complex is composed of two ATP-binding proteins (FetA) and two transmembrane proteins (FetB).

Its subcellular location is the cell inner membrane. Its function is as follows. Part of the ABC transporter complex FetAB, which is probably involved in iron export and enhances resistance to H(2)O(2)-mediated oxidative stress. Probably responsible for the translocation of the substrate across the membrane. This Escherichia coli (strain K12) protein is Probable iron export permease protein FetB (fetB).